The primary structure comprises 111 residues: MIERHMVSTTFDLPGHTVDASLGMVRGIIVRSRSVVGSIGAGLQTIFGGNISLYTSLCERARQDAYERMLADAAMLGANAVIGMRYDATEIGAGVTEVLCYGTAVHARRNV.

The protein belongs to the UPF0145 family.

The polypeptide is UPF0145 protein Bphy_3680 (Paraburkholderia phymatum (strain DSM 17167 / CIP 108236 / LMG 21445 / STM815) (Burkholderia phymatum)).